Here is a 374-residue protein sequence, read N- to C-terminus: Double homeobox protein 4C (374 aa).

Polar residues predominate over residues 1–10 (MALPTPSDST). 3 disordered regions span residues 1–24 (MALP…RRRL), 72–102 (SRQL…TAVT), and 218–374 (LQPS…YELL). 2 consecutive DNA-binding regions (homeobox) follow at residues 19–78 (GRRR…LRQH) and 94–153 (GRRK…PGQG). Basic and acidic residues predominate over residues 265 to 274 (KSREDRDPQR). Composition is skewed to low complexity over residues 278–302 (PGPC…LAPP) and 319–329 (AGAAWEPQAGA). Residues 354 to 374 (QPLQEPGRSSTVTSSLLYELL) show a composition bias toward polar residues.

May interact with MYF5; regulates MYF5 expression. In terms of tissue distribution, expressed in muscles, as well as in primary myoblasts and myotubes (at protein level).

Its subcellular location is the nucleus. The protein resides in the cytoplasm. Functionally, down-regulates MYOD1 expression and may up-regulate MYF5 expression. May regulate microRNA (miRNA) transcription, up-regulating the expression of some myogenic miRNAs, including MIR1-1, MIR133A2, MIR133B and MIR206. Impairs the differentiation of myoblasts and may be involved in muscle regeneration. Reduces DUX4-induced nuclear localization of CTNNB1/beta-catenin and its subsequent activation of target genes. This Homo sapiens (Human) protein is Double homeobox protein 4C (DUX4L9).